Here is a 237-residue protein sequence, read N- to C-terminus: 4'-phosphopantetheinyl transferase HetI (237 aa).

3 residues coordinate Mg(2+): Asp128, Glu130, and Glu174.

It belongs to the P-Pant transferase superfamily. Gsp/Sfp/HetI/AcpT family. The cofactor is Mg(2+).

It catalyses the reaction apo-[peptidyl-carrier protein] + CoA = holo-[peptidyl-carrier protein] + adenosine 3',5'-bisphosphate + H(+). Probably activates the acyl carrier protein (ACP) domain of HetM, by transferring the 4'-phosphopantetheinyl moiety of coenzyme A (CoA) to a serine residue. May be required for maintaining vegetative growth and probably acts via HetN to inhibit differentiation. The protein is 4'-phosphopantetheinyl transferase HetI (hetI) of Nostoc sp. (strain PCC 7120 / SAG 25.82 / UTEX 2576).